We begin with the raw amino-acid sequence, 142 residues long: Sec-independent protein translocase protein TatB (142 aa).

Residues 2–22 (FANVGWGEMLVLVIAGLVILG) traverse the membrane as a helical segment. The interval 89–142 (DDSIFTGKFDQNGKSEKPEQKPEKPQSAPGPAAAVPDQPAGGRSGSTPYDTDAT) is disordered. Positions 99-112 (QNGKSEKPEQKPEK) are enriched in basic and acidic residues. Over residues 133-142 (GSTPYDTDAT) the composition is skewed to polar residues.

It belongs to the TatB family. As to quaternary structure, the Tat system comprises two distinct complexes: a TatABC complex, containing multiple copies of TatA, TatB and TatC subunits, and a separate TatA complex, containing only TatA subunits. Substrates initially bind to the TatABC complex, which probably triggers association of the separate TatA complex to form the active translocon.

Its subcellular location is the cell membrane. In terms of biological role, part of the twin-arginine translocation (Tat) system that transports large folded proteins containing a characteristic twin-arginine motif in their signal peptide across membranes. Together with TatC, TatB is part of a receptor directly interacting with Tat signal peptides. TatB may form an oligomeric binding site that transiently accommodates folded Tat precursor proteins before their translocation. This chain is Sec-independent protein translocase protein TatB, found in Mycolicibacterium vanbaalenii (strain DSM 7251 / JCM 13017 / BCRC 16820 / KCTC 9966 / NRRL B-24157 / PYR-1) (Mycobacterium vanbaalenii).